We begin with the raw amino-acid sequence, 287 residues long: ATP synthase gamma chain (287 aa).

Belongs to the ATPase gamma chain family. F-type ATPases have 2 components, CF(1) - the catalytic core - and CF(0) - the membrane proton channel. CF(1) has five subunits: alpha(3), beta(3), gamma(1), delta(1), epsilon(1). CF(0) has three main subunits: a, b and c.

It is found in the cell inner membrane. Produces ATP from ADP in the presence of a proton gradient across the membrane. The gamma chain is believed to be important in regulating ATPase activity and the flow of protons through the CF(0) complex. This chain is ATP synthase gamma chain, found in Yersinia enterocolitica serotype O:8 / biotype 1B (strain NCTC 13174 / 8081).